The following is a 429-amino-acid chain: Phosphoglucosamine mutase (429 aa).

Ser-96 acts as the Phosphoserine intermediate in catalysis. Residues Ser-96, Asp-230, Asp-232, and Asp-234 each contribute to the Mg(2+) site. The residue at position 96 (Ser-96) is a Phosphoserine.

This sequence belongs to the phosphohexose mutase family. Mg(2+) is required as a cofactor. Post-translationally, activated by phosphorylation.

It carries out the reaction alpha-D-glucosamine 1-phosphate = D-glucosamine 6-phosphate. Its function is as follows. Catalyzes the conversion of glucosamine-6-phosphate to glucosamine-1-phosphate. The polypeptide is Phosphoglucosamine mutase (Thermotoga maritima (strain ATCC 43589 / DSM 3109 / JCM 10099 / NBRC 100826 / MSB8)).